The chain runs to 204 residues: N-(5'-phosphoribosyl)anthranilate isomerase (204 aa).

Belongs to the TrpF family.

The enzyme catalyses N-(5-phospho-beta-D-ribosyl)anthranilate = 1-(2-carboxyphenylamino)-1-deoxy-D-ribulose 5-phosphate. It participates in amino-acid biosynthesis; L-tryptophan biosynthesis; L-tryptophan from chorismate: step 3/5. In Bacillus cereus (strain B4264), this protein is N-(5'-phosphoribosyl)anthranilate isomerase.